We begin with the raw amino-acid sequence, 408 residues long: NADH-quinone oxidoreductase subunit H (408 aa).

9 consecutive transmembrane segments (helical) span residues 18 to 38 (LAKA…AILI), 84 to 104 (PIYL…FSVI), 124 to 144 (LPVA…GIVL), 165 to 185 (VVSY…YAGT), 198 to 218 (TWFV…MVGE), 261 to 281 (SALA…FNLI), 288 to 308 (WWPL…YFWL), 321 to 341 (MALG…VVAI), and 353 to 373 (WAAW…WGLA). The segment at 381-408 (VQPPPPQSTGAYPVPPLPSVGTKETADA) is disordered. Over residues 382 to 398 (QPPPPQSTGAYPVPPLP) the composition is skewed to pro residues.

Belongs to the complex I subunit 1 family. As to quaternary structure, NDH-1 is composed of 14 different subunits. Subunits NuoA, H, J, K, L, M, N constitute the membrane sector of the complex.

Its subcellular location is the cell membrane. The catalysed reaction is a quinone + NADH + 5 H(+)(in) = a quinol + NAD(+) + 4 H(+)(out). NDH-1 shuttles electrons from NADH, via FMN and iron-sulfur (Fe-S) centers, to quinones in the respiratory chain. The immediate electron acceptor for the enzyme in this species is believed to be menaquinone. Couples the redox reaction to proton translocation (for every two electrons transferred, four hydrogen ions are translocated across the cytoplasmic membrane), and thus conserves the redox energy in a proton gradient. This subunit may bind ubiquinone. The chain is NADH-quinone oxidoreductase subunit H from Mycolicibacterium smegmatis (strain ATCC 700084 / mc(2)155) (Mycobacterium smegmatis).